The following is an 866-amino-acid chain: Probable beta-glucosidase F (866 aa).

Positions M1–S20 are cleaved as a signal peptide. N-linked (GlcNAc...) asparagine glycans are attached at residues N65, N73, and N257. The active site involves D285. 8 N-linked (GlcNAc...) asparagine glycosylation sites follow: N328, N360, N395, N421, N474, N659, N664, and N724. The disordered stretch occupies residues S725–A748.

This sequence belongs to the glycosyl hydrolase 3 family.

Its subcellular location is the secreted. It carries out the reaction Hydrolysis of terminal, non-reducing beta-D-glucosyl residues with release of beta-D-glucose.. It participates in glycan metabolism; cellulose degradation. Beta-glucosidases are one of a number of cellulolytic enzymes involved in the degradation of cellulosic biomass. Catalyzes the last step releasing glucose from the inhibitory cellobiose. This Aspergillus flavus (strain ATCC 200026 / FGSC A1120 / IAM 13836 / NRRL 3357 / JCM 12722 / SRRC 167) protein is Probable beta-glucosidase F (bglF).